Reading from the N-terminus, the 1131-residue chain is RNA2 polyprotein (1131 aa).

The disordered stretch occupies residues 213–236 (ALRTHPGGPALPPLPPPPPIQKPP). The span at 221-234 (PALPPLPPPPPIQK) shows a compositional bias: pro residues.

It belongs to the nepoviruses RNA2 polyprotein family. Post-translationally, specific enzymatic cleavages in vivo by the P1 encoded 3C-like protease yield mature proteins.

The protein resides in the host cell junction. It is found in the host plasmodesma. It localises to the virion. Functionally, implicated in RNA2 replication. Could also be required for nematode transmission of the virus. In terms of biological role, transports viral genome to neighboring plant cells directly through plasmosdesmata, without any budding. The movement protein allows efficient cell to cell propagation, by bypassing the host cell wall barrier. Acts by forming a tubular structure at the host plasmodesmata, enlarging it enough to allow free passage of virion capsids. The chain is RNA2 polyprotein from Vitis vinifera (Grape).